Consider the following 293-residue polypeptide: Ribosomal protein L11 methyltransferase (293 aa).

Positions 145, 166, 188, and 230 each coordinate S-adenosyl-L-methionine.

This sequence belongs to the methyltransferase superfamily. PrmA family.

The protein resides in the cytoplasm. The catalysed reaction is L-lysyl-[protein] + 3 S-adenosyl-L-methionine = N(6),N(6),N(6)-trimethyl-L-lysyl-[protein] + 3 S-adenosyl-L-homocysteine + 3 H(+). Functionally, methylates ribosomal protein L11. In Shewanella denitrificans (strain OS217 / ATCC BAA-1090 / DSM 15013), this protein is Ribosomal protein L11 methyltransferase.